The sequence spans 570 residues: Periplasmic trehalase (570 aa).

Residues 1–34 (MIPPEIRRSVLLQKAIKLALAGTLLTFASFSATA) form the signal peptide. Residues Arg-159, 166–167 (WD), Asn-203, 212–214 (RSQ), 284–286 (RPE), and Gly-317 contribute to the substrate site. Catalysis depends on proton donor/acceptor residues Asp-319 and Glu-503. Glu-518 is a binding site for substrate. The tract at residues 544–570 (KPCDSVPSTRPASLSATPTKTPSAATQ) is disordered. A compositionally biased stretch (low complexity) spans 554–570 (PASLSATPTKTPSAATQ).

The protein belongs to the glycosyl hydrolase 37 family. In terms of assembly, monomer.

The protein localises to the periplasm. The catalysed reaction is alpha,alpha-trehalose + H2O = alpha-D-glucose + beta-D-glucose. In terms of biological role, provides the cells with the ability to utilize trehalose at high osmolarity by splitting it into glucose molecules that can subsequently be taken up by the phosphotransferase-mediated uptake system. The polypeptide is Periplasmic trehalase (Salmonella paratyphi B (strain ATCC BAA-1250 / SPB7)).